Consider the following 229-residue polypeptide: MVGNKQVLYKLVVLGDGGVGKTALTIQLCLEHFVETYDPTIEDSYRKQVVIDGQACMLEVLDTAGQEEYTALRDQWIRDGEGFVLVYSISSRSSFARIKKFHHQIQRVKESTSSPSAYPGSSPLAATNPSAPVPIMLVGNKSDRVTEREVSTQEGHALARELGCEFTEASAKTRTNVEKAFYDVVKQLRKQRQQGQSTPRALPPSGNSKSEKYSGTEKPKRPRGKCLII.

15–22 (GDGGVGKT) contributes to the GTP binding site. The short motif at 37-45 (YDPTIEDSY) is the Effector region element. 62–66 (DTAGQ) is a GTP binding site. The segment at 109–132 (KESTSSPSAYPGSSPLAATNPSAP) is disordered. Low complexity predominate over residues 111–126 (STSSPSAYPGSSPLAA). 140–143 (NKSD) serves as a coordination point for GTP. The segment at 188–229 (LRKQRQQGQSTPRALPPSGNSKSEKYSGTEKPKRPRGKCLII) is disordered. A compositionally biased stretch (basic and acidic residues) spans 209–219 (KSEKYSGTEKP). The span at 220–229 (KRPRGKCLII) shows a compositional bias: basic residues. Residue Cys226 is modified to Cysteine methyl ester. Cys226 carries S-farnesyl cysteine lipidation. The propeptide at 227–229 (LII) is removed in mature form.

The protein belongs to the small GTPase superfamily. Ras family.

Its subcellular location is the cell membrane. It catalyses the reaction GTP + H2O = GDP + phosphate + H(+). Ras proteins bind GDP/GTP and possess intrinsic GTPase activity. The polypeptide is Protein ras-2 (ras-2) (Neurospora crassa (strain ATCC 24698 / 74-OR23-1A / CBS 708.71 / DSM 1257 / FGSC 987)).